The primary structure comprises 2084 residues: RNA-directed RNA polymerase L (2084 aa).

Positions 20 to 221 are endonuclease; it reads EPGLYDQIYD…IELQKSEEEL (202 aa). Mn(2+) is bound by residues His-80, Asp-112, and Glu-126. Lys-145 acts as the For endonuclease activity in catalysis. The RdRp catalytic domain occupies 969 to 1172; that stretch reads SARSLGPGSI…FGIYSSEKST (204 aa). Asp-1127 serves as a coordination point for Mg(2+). Residues 1695–1810 are cap-binding; sequence AQSGTLGGFS…TDGCPVRIME (116 aa).

The protein belongs to the Bunyavirales RNA polymerase family. Homomultimer. Interacts with the glycoprotein N; this interaction allows efficient polymerase packaging into virus particles. Interacts with nucleoprotein N. It depends on Mn(2+) as a cofactor. Mg(2+) is required as a cofactor.

Its subcellular location is the host Golgi apparatus. The protein resides in the host endoplasmic reticulum. The protein localises to the host endoplasmic reticulum-Golgi intermediate compartment. It is found in the virion. It catalyses the reaction RNA(n) + a ribonucleoside 5'-triphosphate = RNA(n+1) + diphosphate. With respect to regulation, inhibited by Baloxavir acid (BXA). RNA-dependent RNA polymerase, which is responsible for the replication and transcription of the viral RNA genome using antigenomic RNA as an intermediate. During transcription, synthesizes subgenomic RNAs and assures their capping by a cap-snatching mechanism, which involves the endonuclease activity cleaving the host capped pre-mRNAs. These short capped RNAs are then used as primers for viral transcription. The 3'-end of subgenomic mRNAs molecules are not polyadenylated. During replication, the polymerase binds the 5' and 3' vRNA extremities at distinct sites. In turn, significant conformational changes occur in the polymerase and in vRNA to initiate active RNA synthesis. As a consequence of the use of the same enzyme for both transcription and replication, these mechanisms need to be well coordinated. The protein is RNA-directed RNA polymerase L of Dabie bandavirus (Severe fever with thrombocytopenia virus).